A 549-amino-acid chain; its full sequence is Oxygen-dependent choline dehydrogenase (549 aa).

4–33 provides a ligand contact to FAD; sequence DFVIIGSGSAGSAMAYRLSEDGRYSVIVIE. H465 acts as the Proton acceptor in catalysis.

Belongs to the GMC oxidoreductase family. FAD is required as a cofactor.

It catalyses the reaction choline + A = betaine aldehyde + AH2. It carries out the reaction betaine aldehyde + NAD(+) + H2O = glycine betaine + NADH + 2 H(+). The protein operates within amine and polyamine biosynthesis; betaine biosynthesis via choline pathway; betaine aldehyde from choline (cytochrome c reductase route): step 1/1. Functionally, involved in the biosynthesis of the osmoprotectant glycine betaine. Catalyzes the oxidation of choline to betaine aldehyde and betaine aldehyde to glycine betaine at the same rate. The chain is Oxygen-dependent choline dehydrogenase from Brucella canis (strain ATCC 23365 / NCTC 10854 / RM-666).